The following is a 1347-amino-acid chain: Protocadherin-11 X-linked (1347 aa).

Residues 1–23 form the signal peptide; it reads MDLLSGTYIFAVLLACVVFHSGA. Over 24-812 the chain is Extracellular; sequence QEKNYTIREE…VSSPTSDYVK (789 aa). 7 consecutive Cadherin domains span residues 26-139, 140-249, 250-355, 362-466, 467-570, 571-673, and 677-795; these read KNYT…APLF, PATV…HPVF, KETE…VPSI, NPVN…APVF, TQSF…SPVF, THNE…KPVF, and PSNY…APVT. Residues asparagine 27, asparagine 48, and asparagine 54 are each glycosylated (N-linked (GlcNAc...) asparagine). An N-linked (GlcNAc...) asparagine glycan is attached at asparagine 344. Asparagine 553 carries an N-linked (GlcNAc...) asparagine glycan. A glycan (N-linked (GlcNAc...) asparagine) is linked at asparagine 773. Residues 813–833 traverse the membrane as a helical segment; that stretch reads ILVAAVAGTITVVVVIFITAV. The Cytoplasmic segment spans residues 834–1347; the sequence is VRCRQAPHLK…DSPVMEEHPL (514 aa). 3 disordered regions span residues 1057–1091, 1097–1116, and 1325–1347; these read LPEG…GYPQ, RATP…ESTF, and TFTP…EHPL.

It localises to the cell membrane. In terms of biological role, potential calcium-dependent cell-adhesion protein. The polypeptide is Protocadherin-11 X-linked (PCDH11X) (Pan troglodytes (Chimpanzee)).